The sequence spans 220 residues: N-(5'-phosphoribosyl)anthranilate isomerase (220 aa).

This sequence belongs to the TrpF family.

It carries out the reaction N-(5-phospho-beta-D-ribosyl)anthranilate = 1-(2-carboxyphenylamino)-1-deoxy-D-ribulose 5-phosphate. Its pathway is amino-acid biosynthesis; L-tryptophan biosynthesis; L-tryptophan from chorismate: step 3/5. The sequence is that of N-(5'-phosphoribosyl)anthranilate isomerase from Bordetella petrii (strain ATCC BAA-461 / DSM 12804 / CCUG 43448).